Here is a 265-residue protein sequence, read N- to C-terminus: Polyphosphate glucokinase (265 aa).

Positions 1-18 are enriched in polar residues; that stretch reads MTSTGPETSETPGATTQR. Residues 1-22 are disordered; it reads MTSTGPETSETPGATTQRHGFG. 24 to 29 serves as a coordination point for ATP; it reads DVGGSG.

The protein belongs to the ROK (NagC/XylR) family. As to quaternary structure, homodimer.

The enzyme catalyses [phosphate](n) + D-glucose = [phosphate](n-1) + D-glucose 6-phosphate + H(+). The catalysed reaction is D-glucose + ATP = D-glucose 6-phosphate + ADP + H(+). Functionally, catalyzes the phosphorylation of glucose using polyphosphate or ATP as the phosphoryl donor. Polyphosphate, rather than ATP, seems to be the major phosphate donor for the enzyme in M.tuberculosis. GTP, UTP and CTP can replace ATP as phosphoryl donor. This is Polyphosphate glucokinase (ppgK) from Mycobacterium tuberculosis (strain ATCC 25177 / H37Ra).